Consider the following 648-residue polypeptide: Zinc finger CW-type PWWP domain protein 1 (648 aa).

2 disordered regions span residues 1 to 103 (MMTT…TNAE) and 137 to 237 (VVST…QDHS). 2 stretches are compositionally biased toward basic and acidic residues: residues 61 to 79 (KKKE…EQEK) and 88 to 97 (QAEKKEKEKS). Positions 74 to 109 (SREQEKKRKAQINKQAEKKEKEKSSLTNAEFEEIVQ) form a coiled coil. The segment covering 194-208 (SKKKSNRLTLSKRKK) has biased composition (basic residues). A compositionally biased stretch (basic and acidic residues) spans 209–237 (EAHEKVEKTQGGHEHRQEDRLKKTVQDHS). A CW-type zinc finger spans residues 250–304 (FGQCLVWVQCSFPNCGKWRRLCGNIDPSVLPDNWSCDQNTDVQYNRCDIPEETWT). 4 residues coordinate Zn(2+): cysteine 259, cysteine 264, cysteine 285, and cysteine 296. The 67-residue stretch at 317–383 (PGSIIWAKQY…VNMLKNFQEL (67 aa)) folds into the PWWP domain. The interval 436–648 (GERKDLQLSG…EDFPVALFGK (213 aa)) is disordered. Residues 453-471 (LEKKEKEEELEKEEGEKTD) are compositionally biased toward basic and acidic residues. Basic residues predominate over residues 505 to 516 (TLQRKIMKRSLG). The span at 585–595 (AKEEPRHREPL) shows a compositional bias: basic and acidic residues. The segment covering 604-618 (LEDEASSDLDLEQLM) has biased composition (acidic residues). Serine 636 is subject to Phosphoserine.

In terms of tissue distribution, testis.

It is found in the nucleus. Its subcellular location is the chromosome. Dual histone methylation reader specific for PRDM9-catalyzed histone marks (H3K4me3 and H3K36me3). Facilitates the repair of PRDM9-induced meiotic double-strand breaks (DSBs). Essential for male fertility and spermatogenesis. Required for meiosis prophase I progression in male but not in female germ cells. This is Zinc finger CW-type PWWP domain protein 1 (ZCWPW1) from Homo sapiens (Human).